Consider the following 677-residue polypeptide: Histidine ammonia-lyase (677 aa).

The segment at residues 269–271 (CSG) is a cross-link (5-imidazolinone (Cys-Gly)). The residue at position 270 (S270) is a 2,3-didehydroalanine (Ser).

Belongs to the PAL/histidase family. Contains an active site 4-methylidene-imidazol-5-one (MIO), which is formed autocatalytically by cyclization and dehydration of residues Cys-Ser-Gly.

The enzyme catalyses L-histidine = trans-urocanate + NH4(+). It participates in amino-acid degradation; L-histidine degradation into L-glutamate; N-formimidoyl-L-glutamate from L-histidine: step 1/3. In Caenorhabditis elegans, this protein is Histidine ammonia-lyase.